The sequence spans 144 residues: Maximins 7/H13 (144 aa).

The N-terminal stretch at 1 to 18 (MNFKYIVAVSFLIASAYA) is a signal peptide. Residues 19–43 (RSEENDEQSLSQRDVLEEESLREIR) constitute a propeptide that is removed on maturation. The residue at position 70 (Asn-70) is an Asparagine amide. Residues 74–123 (TAEDHEVMKRLEAVMRDLDSLDYPEEAAERETRGFNQEEIANLFTKKEKR) constitute a propeptide that is removed on maturation. Leu-143 is modified (leucine amide).

The protein belongs to the bombinin family. As to expression, expressed by the skin glands.

The protein resides in the secreted. Its function is as follows. Maximin-7 shows antimicrobial activity against bacteria and against the fungus C.albicans. It has little hemolytic activity. In terms of biological role, maximin-H13 shows antimicrobial activity against bacteria and against the fungus C.albicans. Shows strong hemolytic activity. The chain is Maximins 7/H13 from Bombina maxima (Giant fire-bellied toad).